Consider the following 225-residue polypeptide: Ribosomal RNA small subunit methyltransferase G (225 aa).

Residues Gly-96, Phe-101, 146 to 147, and Arg-160 contribute to the S-adenosyl-L-methionine site; that span reads AE.

This sequence belongs to the methyltransferase superfamily. RNA methyltransferase RsmG family.

It is found in the cytoplasm. Specifically methylates the N7 position of a guanine in 16S rRNA. The sequence is that of Ribosomal RNA small subunit methyltransferase G from Mycoplasma mobile (strain ATCC 43663 / 163K / NCTC 11711) (Mesomycoplasma mobile).